The following is a 346-amino-acid chain: Annexin A1 (346 aa).

Alanine 2 is modified (N-acetylalanine). Serine 5 bears the Phosphoserine; by TRPM7 mark. Glutamine 19 is covalently cross-linked (Isoglutamyl lysine isopeptide (Gln-Lys) (interchain with K-?)). Tyrosine 21 is subject to Phosphotyrosine; by EGFR. The residue at position 27 (serine 27) is a Phosphoserine; by PKC. Serine 34 and serine 37 each carry phosphoserine. Threonine 41 is subject to Phosphothreonine. Annexin repeat units follow at residues 42-113 (FNPS…ALLK), 114-185 (TPAQ…SLAK), 197-269 (DLAD…AIVK), and 273-344 (SKPA…ALCG). Residue lysine 58 is modified to N6-acetyllysine. The Ca(2+) site is built by glycine 59, valine 60, glutamate 62, lysine 97, leucine 100, glutamate 105, methionine 127, glycine 129, glycine 131, threonine 132, and glutamate 134. Threonine 136 carries the phosphothreonine modification. Residues aspartate 171, glycine 210, and arginine 213 each contribute to the Ca(2+) site. Lysine 214 is covalently cross-linked (Glycyl lysine isopeptide (Lys-Gly) (interchain with G-Cter in SUMO1); alternate). Lysine 214 participates in a covalent cross-link: Glycyl lysine isopeptide (Lys-Gly) (interchain with G-Cter in SUMO2); alternate. Glycine 215 provides a ligand contact to Ca(2+). N6-acetyllysine is present on lysine 239. Residues aspartate 253, glutamate 255, and leucine 256 each contribute to the Ca(2+) site. Lysine 257 is covalently cross-linked (Glycyl lysine isopeptide (Lys-Gly) (interchain with G-Cter in SUMO1)). Positions 261, 286, 288, and 290 each coordinate Ca(2+). Residue lysine 312 is modified to N6-acetyllysine. The cysteines at positions 324 and 343 are disulfide-linked. Leucine 328, glutamate 330, and threonine 331 together coordinate Ca(2+). Lysine 332 is covalently cross-linked (Glycyl lysine isopeptide (Lys-Gly) (interchain with G-Cter in SUMO1)). Glutamate 336 serves as a coordination point for Ca(2+).

It belongs to the annexin family. In terms of assembly, homodimer; non-covalently linked. Homodimer; linked by transglutamylation. Homodimers linked by transglutamylation are observed in placenta, but not in other tissues. Interacts with S100A11. Heterotetramer, formed by two molecules each of S100A11 and ANXA1. Interacts with DYSF. Interacts with EGFR. Post-translationally, phosphorylated by protein kinase C, EGFR and TRPM7. Phosphorylated in response to EGF treatment. In terms of processing, sumoylated. Proteolytically cleaved by cathepsin CTSG to release the active N-terminal peptide Ac2-26. In terms of tissue distribution, detected in resting neutrophils. Detected in peripheral blood T-cells. Detected in extracellular vesicles in blood serum from patients with inflammatory bowel disease, but not in serum from healthy donors. Detected in placenta (at protein level). Detected in liver.

The protein localises to the nucleus. The protein resides in the cytoplasm. Its subcellular location is the cell projection. It localises to the cilium. It is found in the cell membrane. The protein localises to the membrane. The protein resides in the endosome membrane. Its subcellular location is the basolateral cell membrane. It localises to the apical cell membrane. It is found in the lateral cell membrane. The protein localises to the secreted. The protein resides in the extracellular space. Its subcellular location is the extracellular exosome. It localises to the cytoplasmic vesicle. It is found in the secretory vesicle lumen. The protein localises to the phagocytic cup. The protein resides in the early endosome. Its subcellular location is the cytoplasmic vesicle membrane. Functionally, plays important roles in the innate immune response as effector of glucocorticoid-mediated responses and regulator of the inflammatory process. Has anti-inflammatory activity. Plays a role in glucocorticoid-mediated down-regulation of the early phase of the inflammatory response. Contributes to the adaptive immune response by enhancing signaling cascades that are triggered by T-cell activation, regulates differentiation and proliferation of activated T-cells. Promotes the differentiation of T-cells into Th1 cells and negatively regulates differentiation into Th2 cells. Has no effect on unstimulated T cells. Negatively regulates hormone exocytosis via activation of the formyl peptide receptors and reorganization of the actin cytoskeleton. Has high affinity for Ca(2+) and can bind up to eight Ca(2+) ions. Displays Ca(2+)-dependent binding to phospholipid membranes. Plays a role in the formation of phagocytic cups and phagosomes. Plays a role in phagocytosis by mediating the Ca(2+)-dependent interaction between phagosomes and the actin cytoskeleton. In terms of biological role, functions at least in part by activating the formyl peptide receptors and downstream signaling cascades. Promotes chemotaxis of granulocytes and monocytes via activation of the formyl peptide receptors. Promotes rearrangement of the actin cytoskeleton, cell polarization and cell migration. Promotes resolution of inflammation and wound healing. Acts via neutrophil N-formyl peptide receptors to enhance the release of CXCL2. This Homo sapiens (Human) protein is Annexin A1 (ANXA1).